Reading from the N-terminus, the 781-residue chain is ATP-dependent 6-phosphofructokinase (781 aa).

The segment at 1–394 (MATWMEGKYV…NLATYIKLSK (394 aa)) is N-terminal catalytic PFK domain 1. ATP-binding positions include Gly-27, 90 to 91 (RC), and 120 to 123 (GDGS). Asp-121 provides a ligand contact to Mg(2+). Residues 166–168 (SID), Arg-203, 210–212 (MGR), Glu-266, Arg-294, and 300–303 (HVQR) each bind substrate. The active-site Proton acceptor is Asp-168. The segment at 395-409 (IEQPRQSVMSSENNL) is interdomain linker. The segment at 410 to 781 (RIGIVNVGAP…ESIMAGTDRK (372 aa)) is C-terminal regulatory PFK domain 2. Beta-D-fructose 2,6-bisphosphate contacts are provided by residues Arg-479, 537 to 541 (TISNN), Arg-575, 582 to 584 (MGG), Asp-638, Arg-664, 670 to 673 (HMQQ), and Arg-745.

This sequence belongs to the phosphofructokinase type A (PFKA) family. ATP-dependent PFK group I subfamily. Eukaryotic two domain clade 'E' sub-subfamily. In terms of assembly, homotetramer. Mg(2+) serves as cofactor.

Its subcellular location is the cytoplasm. It catalyses the reaction beta-D-fructose 6-phosphate + ATP = beta-D-fructose 1,6-bisphosphate + ADP + H(+). It functions in the pathway carbohydrate degradation; glycolysis; D-glyceraldehyde 3-phosphate and glycerone phosphate from D-glucose: step 3/4. Its activity is regulated as follows. Allosterically activated by ADP, AMP, or fructose 2,6-bisphosphate, and allosterically inhibited by ATP or citrate. Its function is as follows. Catalyzes the phosphorylation of D-fructose 6-phosphate to fructose 1,6-bisphosphate by ATP, the first committing step of glycolysis. This chain is ATP-dependent 6-phosphofructokinase (PFK), found in Schistosoma mansoni (Blood fluke).